The primary structure comprises 302 residues: Dioxygenase ALT11 (302 aa).

Residues 1–22 form a disordered region; that stretch reads MSSPELPSQMGVPNGHTKLQEV. Fe cation-binding residues include His-147, Asp-149, and His-223.

It belongs to the PhyH family. As to quaternary structure, homodimer. It depends on Fe cation as a cofactor.

It functions in the pathway mycotoxin biosynthesis. Its function is as follows. Dioxygenase; part of the gene cluster that mediates the biosynthesis of the host-selective toxins (HSTs) AAL-toxins, sphinganine-analog mycotoxins responsible for Alternaria stem canker on tomato by the tomato pathotype. The biosynthesis starts with the polyketide synthase ALT1-catalyzed C-16 carbon chain assembly from one starter acetyl-CoA unit with malonyl-CoA extender units. ALT1 also selectively transfers methyl groups at the first and the third cycle of chain elongation for AAL toxin. The C-16 polyketide chain is released from the enzyme by a nucleophilic attack of a carbanion, which is derived from R-carbon of glycin by decarboxylation, on the carbonyl carbon of polyketide acyl chain. This step is probably catalyzed by a pyridoxal 5'-phosphate-dependent aminoacyl transferase ALT4. The respective functions of the other enzymes encoded by the cluster have still to be elucidated. The sphingosine N-acyltransferase-like protein ALT7 seems not to act as a resistance/self-tolerance factor against the toxin in the toxin biosynthetic gene cluster, contrary to what is expected. The sequence is that of Dioxygenase ALT11 from Alternaria alternata (Alternaria rot fungus).